We begin with the raw amino-acid sequence, 80 residues long: Metallothionein-like protein 2B (80 aa).

Belongs to the metallothionein superfamily. Type 15 family. In terms of tissue distribution, highly expressed in stems. Expressed in leaves and rachis.

Its function is as follows. Metallothioneins have a high content of cysteine residues that bind various heavy metals. This is Metallothionein-like protein 2B (MT2B) from Oryza sativa subsp. japonica (Rice).